Consider the following 222-residue polypeptide: MNEELSAFFDVPVGTMMLAIAFPAILLPTPNRLITNRWITIQQWLIQLIMKQLLSIHNMKGLSWSLMLITLTLFIGLTNLLGLLPYSFAPTTQLTVNLSMAIPLWTGTVVLGFRYKTKISLAHLLPQGTPTFLIPMIIIIETISLLIRPITLAVRLTANITAGHLLIHLTGSAALTLLSVHLMTITVTFITVVMLTILELAVALIQAYVFALLISLYLHESA.

6 consecutive transmembrane segments (helical) span residues 7-27, 64-84, 93-113, 132-152, 160-180, and 197-219; these read AFFDVPVGTMMLAIAFPAILL, WSLMLITLTLFIGLTNLLGLL, QLTVNLSMAIPLWTGTVVLGF, FLIPMIIIIETISLLIRPITL, ITAGHLLIHLTGSAALTLLSV, and ILELAVALIQAYVFALLISLYLH.

Belongs to the ATPase A chain family. Component of the ATP synthase complex composed at least of ATP5F1A/subunit alpha, ATP5F1B/subunit beta, ATP5MC1/subunit c (homooctomer), MT-ATP6/subunit a, MT-ATP8/subunit 8, ATP5ME/subunit e, ATP5MF/subunit f, ATP5MG/subunit g, ATP5MK/subunit k, ATP5MJ/subunit j, ATP5F1C/subunit gamma, ATP5F1D/subunit delta, ATP5F1E/subunit epsilon, ATP5PF/subunit F6, ATP5PB/subunit b, ATP5PD/subunit d, ATP5PO/subunit OSCP. ATP synthase complex consists of a soluble F(1) head domain (subunits alpha(3) and beta(3)) - the catalytic core - and a membrane F(0) domain - the membrane proton channel (subunits c, a, 8, e, f, g, k and j). These two domains are linked by a central stalk (subunits gamma, delta, and epsilon) rotating inside the F1 region and a stationary peripheral stalk (subunits F6, b, d, and OSCP). Interacts with DNAJC30; interaction is direct.

It localises to the mitochondrion inner membrane. It catalyses the reaction H(+)(in) = H(+)(out). Subunit a, of the mitochondrial membrane ATP synthase complex (F(1)F(0) ATP synthase or Complex V) that produces ATP from ADP in the presence of a proton gradient across the membrane which is generated by electron transport complexes of the respiratory chain. ATP synthase complex consist of a soluble F(1) head domain - the catalytic core - and a membrane F(1) domain - the membrane proton channel. These two domains are linked by a central stalk rotating inside the F(1) region and a stationary peripheral stalk. During catalysis, ATP synthesis in the catalytic domain of F(1) is coupled via a rotary mechanism of the central stalk subunits to proton translocation. With the subunit c (ATP5MC1), forms the proton-conducting channel in the F(0) domain, that contains two crucial half-channels (inlet and outlet) that facilitate proton movement from the mitochondrial intermembrane space (IMS) into the matrix. Protons are taken up via the inlet half-channel and released through the outlet half-channel, following a Grotthuss mechanism. This chain is ATP synthase F(0) complex subunit a, found in Elephas maximus (Indian elephant).